Here is a 28-residue protein sequence, read N- to C-terminus: Kalata-B12 (28 aa).

Residues 1–28 constitute a cross-link (cyclopeptide (Gly-Asp)); the sequence is GSLCGDTCFVLGCNDSSCSCNYPICVKD. Cystine bridges form between Cys-4-Cys-18, Cys-8-Cys-20, and Cys-13-Cys-25.

This is a cyclic peptide.

Its function is as follows. Probably participates in a plant defense mechanism. The sequence is that of Kalata-B12 from Oldenlandia affinis.